Here is a 492-residue protein sequence, read N- to C-terminus: UPF0236 protein TTE0402 (492 aa).

This sequence belongs to the UPF0236 family.

The polypeptide is UPF0236 protein TTE0402 (Caldanaerobacter subterraneus subsp. tengcongensis (strain DSM 15242 / JCM 11007 / NBRC 100824 / MB4) (Thermoanaerobacter tengcongensis)).